Consider the following 156-residue polypeptide: Probable chemoreceptor glutamine deamidase CheD (156 aa).

The protein belongs to the CheD family.

It carries out the reaction L-glutaminyl-[protein] + H2O = L-glutamyl-[protein] + NH4(+). Functionally, probably deamidates glutamine residues to glutamate on methyl-accepting chemotaxis receptors (MCPs), playing an important role in chemotaxis. The chain is Probable chemoreceptor glutamine deamidase CheD from Bdellovibrio bacteriovorus (strain ATCC 15356 / DSM 50701 / NCIMB 9529 / HD100).